The chain runs to 222 residues: Protein GrpE (222 aa).

Disordered stretches follow at residues 1-21 and 200-222; these read MNDG…ENGQ and KGGP…PEGA.

The protein belongs to the GrpE family. Homodimer.

Its subcellular location is the cytoplasm. In terms of biological role, participates actively in the response to hyperosmotic and heat shock by preventing the aggregation of stress-denatured proteins, in association with DnaK and GrpE. It is the nucleotide exchange factor for DnaK and may function as a thermosensor. Unfolded proteins bind initially to DnaJ; upon interaction with the DnaJ-bound protein, DnaK hydrolyzes its bound ATP, resulting in the formation of a stable complex. GrpE releases ADP from DnaK; ATP binding to DnaK triggers the release of the substrate protein, thus completing the reaction cycle. Several rounds of ATP-dependent interactions between DnaJ, DnaK and GrpE are required for fully efficient folding. The sequence is that of Protein GrpE from Chelativorans sp. (strain BNC1).